The primary structure comprises 187 residues: Peptide deformylase 1 (187 aa).

Fe cation is bound by residues Cys-107 and His-149. Glu-150 is a catalytic residue. Position 153 (His-153) interacts with Fe cation.

Belongs to the polypeptide deformylase family. It depends on Fe(2+) as a cofactor.

It catalyses the reaction N-terminal N-formyl-L-methionyl-[peptide] + H2O = N-terminal L-methionyl-[peptide] + formate. In terms of biological role, removes the formyl group from the N-terminal Met of newly synthesized proteins. Requires at least a dipeptide for an efficient rate of reaction. N-terminal L-methionine is a prerequisite for activity but the enzyme has broad specificity at other positions. In Nostoc sp. (strain PCC 7120 / SAG 25.82 / UTEX 2576), this protein is Peptide deformylase 1.